Here is a 592-residue protein sequence, read N- to C-terminus: Aspartate--tRNA(Asp/Asn) ligase (592 aa).

E175 lines the L-aspartate pocket. Residues 199–202 (QQFK) are aspartate. Residues R221 and H451 each contribute to the L-aspartate site. 221–223 (RDE) contacts ATP. Position 485 (E485) interacts with ATP. Residue R492 coordinates L-aspartate. 537–540 (GIDR) contacts ATP.

It belongs to the class-II aminoacyl-tRNA synthetase family. Type 1 subfamily. As to quaternary structure, homodimer.

The protein localises to the cytoplasm. The enzyme catalyses tRNA(Asx) + L-aspartate + ATP = L-aspartyl-tRNA(Asx) + AMP + diphosphate. In terms of biological role, aspartyl-tRNA synthetase with relaxed tRNA specificity since it is able to aspartylate not only its cognate tRNA(Asp) but also tRNA(Asn). Reaction proceeds in two steps: L-aspartate is first activated by ATP to form Asp-AMP and then transferred to the acceptor end of tRNA(Asp/Asn). The protein is Aspartate--tRNA(Asp/Asn) ligase of Phenylobacterium zucineum (strain HLK1).